Here is a 254-residue protein sequence, read N- to C-terminus: Coenzyme F420:L-glutamate ligase (254 aa).

GTP contacts are provided by residues isoleucine 11–isoleucine 14, serine 40–threonine 41, and lysine 45. Aspartate 109 provides a ligand contact to a divalent metal cation. Residue asparagine 112 coordinates GTP. A divalent metal cation is bound by residues aspartate 150, threonine 151, and glutamate 208. Methionine 206 to isoleucine 213 contributes to the GTP binding site.

It belongs to the CofE family. As to quaternary structure, homodimer. Mg(2+) is required as a cofactor. Mn(2+) serves as cofactor. It depends on K(+) as a cofactor.

It catalyses the reaction oxidized coenzyme F420-0 + GTP + L-glutamate = oxidized coenzyme F420-1 + GDP + phosphate + H(+). The catalysed reaction is oxidized coenzyme F420-1 + GTP + L-glutamate = oxidized coenzyme F420-2 + GDP + phosphate + H(+). The protein operates within cofactor biosynthesis; coenzyme F420 biosynthesis. Its function is as follows. Catalyzes the GTP-dependent successive addition of two or more gamma-linked L-glutamates to the L-lactyl phosphodiester of 7,8-didemethyl-8-hydroxy-5-deazariboflavin (F420-0) to form coenzyme F420-0-glutamyl-glutamate (F420-2) or polyglutamated F420 derivatives. This is Coenzyme F420:L-glutamate ligase from Methanosarcina mazei (strain ATCC BAA-159 / DSM 3647 / Goe1 / Go1 / JCM 11833 / OCM 88) (Methanosarcina frisia).